The following is a 192-amino-acid chain: Leucine-rich repeat-containing protein 51 (192 aa).

3 LRR repeats span residues 49–71 (SLTQSLWLNNNVLNDLRDFNQVA), 80–101 (NLAWIDLSFNDLTSIDPVLTTF), and 103–124 (NLSVLYLHGNSIQHLGEVNKLA). Positions 137–175 (NPMEEEKGYRQYVLCTLPHITTFDFSGVTKADRTTAEVW) constitute an LRRCT domain.

The protein localises to the cytoplasm. The sequence is that of Leucine-rich repeat-containing protein 51 from Macaca mulatta (Rhesus macaque).